Here is a 338-residue protein sequence, read N- to C-terminus: Ketol-acid reductoisomerase (NADP(+)) (338 aa).

Positions 1 to 181 constitute a KARI N-terminal Rossmann domain; that stretch reads MNVYYDRDCD…GGGRTGIIET (181 aa). Residues 24–27, Arg-47, Ser-50, Ser-52, and 82–85 contribute to the NADP(+) site; these read YGSQ and DEFQ. The active site involves His-107. NADP(+) is bound at residue Gly-133. The KARI C-terminal knotted domain maps to 182-327; sequence TFKDETETDL…GNLRAMMPWI (146 aa). 4 residues coordinate Mg(2+): Asp-190, Glu-194, Glu-226, and Glu-230. A substrate-binding site is contributed by Ser-251.

This sequence belongs to the ketol-acid reductoisomerase family. It depends on Mg(2+) as a cofactor.

The catalysed reaction is (2R)-2,3-dihydroxy-3-methylbutanoate + NADP(+) = (2S)-2-acetolactate + NADPH + H(+). It carries out the reaction (2R,3R)-2,3-dihydroxy-3-methylpentanoate + NADP(+) = (S)-2-ethyl-2-hydroxy-3-oxobutanoate + NADPH + H(+). It functions in the pathway amino-acid biosynthesis; L-isoleucine biosynthesis; L-isoleucine from 2-oxobutanoate: step 2/4. The protein operates within amino-acid biosynthesis; L-valine biosynthesis; L-valine from pyruvate: step 2/4. Involved in the biosynthesis of branched-chain amino acids (BCAA). Catalyzes an alkyl-migration followed by a ketol-acid reduction of (S)-2-acetolactate (S2AL) to yield (R)-2,3-dihydroxy-isovalerate. In the isomerase reaction, S2AL is rearranged via a Mg-dependent methyl migration to produce 3-hydroxy-3-methyl-2-ketobutyrate (HMKB). In the reductase reaction, this 2-ketoacid undergoes a metal-dependent reduction by NADPH to yield (R)-2,3-dihydroxy-isovalerate. The protein is Ketol-acid reductoisomerase (NADP(+)) of Trichlorobacter lovleyi (strain ATCC BAA-1151 / DSM 17278 / SZ) (Geobacter lovleyi).